The chain runs to 735 residues: MNGDTRAAVVTSPPPTTAPHKERYFDRVDENNPEYLRERNMAPDLRQDFNMMEQKKRVSMILQSPAFCEELESMIQEQFKKGKNPTGLLALQQIADFMTASVPNVYPAAPQGGMAALNMSLGMVTPVNDLRGSDSIAYDKGEKLLRCKLAAFYRLADLFGWSQLIYNHITTRVNSEQEHFLIVPFGLLYSEVTASSLVKVNLQGDIVDRGSTNLGVNQAGFTLHSAIYAARPDAKCIVHIHTPAGAAVSAMKCGLLPISPEALSLGEVAYHDYHGILVDEEEKILIQKNLGPKSKVLILRNHGLVSVGESVEEAFYYIHNLVVACEIQVRTLASAGGPDNLVLLDPGKYKAKSRSPGTPAGEGSGSPPKWQIGEQEFEALMRMLDNLGYRTGYPYRYPALRERSKKYSDVEVPASVTGHSFASDGDSGTCSPLRHSFQKQQREKTRWLNSGRGDDASEEGQNGSSPKSKTKWTKEDGHRTSTSAVPNLFVPLNTNPKEVQEMRNKIREQNLQDIKTAGPQSQVLCGVMMDRSLVQGELVTASKAIIEKEYQPHVIVSTTGPNPFNTLTDRELEEYRREVERKQKGSEENLDETREQKEKSPPDQSAVPNTPPSTPVKLEGGLPQEPTSRDGSDATTSKPTPPDLSPDEPSEALAFPTVAEEAHASPDTTQPLAEADPEPASASAPGAEEVASPATEEGSPMDPGSDGSPGKSPSKKKKKFRTPSFLKKSKKKSDS.

At M1 the chain carries N-acetylmethionine. Over residues 1–11 (MNGDTRAAVVT) the composition is skewed to low complexity. A disordered region spans residues 1–21 (MNGDTRAAVVTSPPPTTAPHK). Position 12 is a phosphoserine (S12). S59 carries the post-translational modification Phosphoserine; by PKA. Phosphoserine is present on S64. T331 bears the Phosphothreonine mark. Residues S334, S353, and S355 each carry the phosphoserine modification. At T358 the chain carries Phosphothreonine. Phosphoserine is present on residues S364 and S366. S408 is modified (phosphoserine; by PKA). 2 disordered regions span residues 418–486 (GHSF…SAVP) and 576–735 (RREV…KSDS). Phosphoserine is present on S427. Residue T429 is modified to Phosphothreonine. S431 carries the phosphoserine modification. Position 436 is a phosphoserine; by PKA (S436). Phosphothreonine; by ROCK2 is present on T445. A phosphoserine mark is found at S464 and S465. Residue T480 is modified to Phosphothreonine; by ROCK2. The residue at position 481 (S481) is a Phosphoserine; by PKA. Basic and acidic residues predominate over residues 576–601 (RREVERKQKGSEENLDETREQKEKSP). A phosphoserine mark is found at S586, S600, and S605. T610 carries the post-translational modification Phosphothreonine. S613 is modified (phosphoserine). The residue at position 614 (T614) is a Phosphothreonine. Residues 678 to 712 (EPASASAPGAEEVASPATEEGSPMDPGSDGSPGKS) show a composition bias toward low complexity. Phosphoserine occurs at positions 705, 708, and 712. A compositionally biased stretch (basic residues) spans 713 to 735 (PSKKKKKFRTPSFLKKSKKKSDS). The residue at position 714 (S714) is a Phosphoserine; by PKC. Positions 715 to 732 (KKKKKFRTPSFLKKSKKK) are interaction with calmodulin. S724 is modified (phosphoserine; by PKA and PKC).

This sequence belongs to the aldolase class II family. Adducin subfamily. In terms of assembly, heterodimer of an alpha and a beta subunit or an alpha and a gamma subunit.

It is found in the cytoplasm. The protein localises to the cytoskeleton. It localises to the cell membrane. Functionally, membrane-cytoskeleton-associated protein that promotes the assembly of the spectrin-actin network. Binds to calmodulin. This is Alpha-adducin (Add1) from Rattus norvegicus (Rat).